The primary structure comprises 265 residues: Expansin-like A1 (265 aa).

Residues 1 to 20 (MGSFLFLIVVIFLFSSSVNA) form the signal peptide. An Expansin-like EG45 domain is found at 41–147 (SGACAYGSMA…QRVPCDYGNK (107 aa)). The chain crosses the membrane as a helical span at residues 42 to 62 (GACAYGSMATSFFAGHIAAAI). N-linked (GlcNAc...) asparagine glycosylation is found at Asn99 and Asn102. The region spanning 161-244 (NYLEIKLLYQ…NWEAGKIYDA (84 aa)) is the Expansin-like CBD domain.

This sequence belongs to the expansin family. Expansin-like A subfamily.

It is found in the membrane. This chain is Expansin-like A1 (EXLA1), found in Arabidopsis thaliana (Mouse-ear cress).